The primary structure comprises 321 residues: Aspartate carbamoyltransferase catalytic subunit (321 aa).

Carbamoyl phosphate is bound by residues Arg-65 and Thr-66. Lys-93 lines the L-aspartate pocket. Carbamoyl phosphate contacts are provided by Arg-115, His-143, and Gln-146. The L-aspartate site is built by Arg-176 and Arg-230. Carbamoyl phosphate contacts are provided by Gly-271 and Pro-272.

It belongs to the aspartate/ornithine carbamoyltransferase superfamily. ATCase family. Heterododecamer (2C3:3R2) of six catalytic PyrB chains organized as two trimers (C3), and six regulatory PyrI chains organized as three dimers (R2).

The catalysed reaction is carbamoyl phosphate + L-aspartate = N-carbamoyl-L-aspartate + phosphate + H(+). It participates in pyrimidine metabolism; UMP biosynthesis via de novo pathway; (S)-dihydroorotate from bicarbonate: step 2/3. In terms of biological role, catalyzes the condensation of carbamoyl phosphate and aspartate to form carbamoyl aspartate and inorganic phosphate, the committed step in the de novo pyrimidine nucleotide biosynthesis pathway. The protein is Aspartate carbamoyltransferase catalytic subunit of Bartonella bacilliformis (strain ATCC 35685 / KC583 / Herrer 020/F12,63).